Reading from the N-terminus, the 470-residue chain is MMSSPIPHQQTIAAVATAVAPGQGGIAVVRLSGPAAEVVGRSVVSIPGQQLWVSHRVLYGHVMDESGKERIDEVLVLLMKGPRSFTGEDVVEIHCHGGLMAVQRVLERVLAQPHVRRALPGEFSQRAVLNGRLDLTQAEAISELVAARSRRAAQLAMTGVDGGIQRRITSLRERLLDQLSELEARVDFEEDLPPLDGAELLLELQCVRRELEQLVEDAKRGDVLRQGLQVALVGRPNVGKSSLLNRLSRRERAIVTDLPGTTRDVLESEIVLEGVPITLVDTAGIRATQDALEQLGIDRSHQALAAADVAVLVFDLSLGWTADDAALLAQIPDDLPRLLVGNKADLQPASMAASLMVASLGNEVDGKTVDVMLSALTGQGEEALIKAVLKTCGASEAQGLVVALNQRQQDLAAAAAIALARTQEAAEHQLPWDFWTIDLRQAISSLGEITGEEITEAVLDRIFSRFCIGK.

(6S)-5-formyl-5,6,7,8-tetrahydrofolate is bound by residues Arg30, Glu92, and Arg132. Residues Gly227–Gly393 form the TrmE-type G domain. Asn237 provides a ligand contact to K(+). Residues Asn237–Ser242, Thr256–Thr262, Asp281–Gly284, and Asn342–Asp345 each bind GTP. Residue Ser241 coordinates Mg(2+). Thr256, Leu258, and Thr261 together coordinate K(+). Thr262 provides a ligand contact to Mg(2+). Lys470 is a (6S)-5-formyl-5,6,7,8-tetrahydrofolate binding site.

This sequence belongs to the TRAFAC class TrmE-Era-EngA-EngB-Septin-like GTPase superfamily. TrmE GTPase family. As to quaternary structure, homodimer. Heterotetramer of two MnmE and two MnmG subunits. K(+) is required as a cofactor.

Its subcellular location is the cytoplasm. Functionally, exhibits a very high intrinsic GTPase hydrolysis rate. Involved in the addition of a carboxymethylaminomethyl (cmnm) group at the wobble position (U34) of certain tRNAs, forming tRNA-cmnm(5)s(2)U34. This Prochlorococcus marinus (strain MIT 9313) protein is tRNA modification GTPase MnmE.